A 159-amino-acid chain; its full sequence is Urease accessory protein UreE (159 aa).

This sequence belongs to the UreE family.

It localises to the cytoplasm. In terms of biological role, involved in urease metallocenter assembly. Binds nickel. Probably functions as a nickel donor during metallocenter assembly. The protein is Urease accessory protein UreE of Acinetobacter baylyi (strain ATCC 33305 / BD413 / ADP1).